The following is an 837-amino-acid chain: E3 ubiquitin-protein ligase bre-1 (837 aa).

The disordered stretch occupies residues Met-1–Pro-33. An interaction with ubc-1 region spans residues Met-1–Glu-313. Coiled-coil stretches lie at residues Thr-54–Phe-89 and His-185–Arg-253. Positions Gly-269–Thr-302 are disordered. The segment covering Ala-277–Ala-287 has biased composition (polar residues). Coiled-coil stretches lie at residues Ser-300–Ser-397, Asp-458–Thr-651, and Val-677–Val-763. An RING-type zinc finger spans residues Cys-785 to Asn-824.

This sequence belongs to the BRE1 family. Interacts with ubc-1. Interacts with mrg-1. In terms of tissue distribution, in adult animals, expressed in oocytes, germ cells, pharyngeal and intestinal cells.

The protein resides in the nucleus. It catalyses the reaction S-ubiquitinyl-[E2 ubiquitin-conjugating enzyme]-L-cysteine + [acceptor protein]-L-lysine = [E2 ubiquitin-conjugating enzyme]-L-cysteine + N(6)-ubiquitinyl-[acceptor protein]-L-lysine.. Its pathway is protein modification; protein ubiquitination. In terms of biological role, E3 ubiquitin-protein ligase that mediates monoubiquitination of 'Lys-117' of histone H2B. H2B 'Lys-117' ubiquitination gives a specific tag for epigenetic transcriptional activation and is also prerequisite for histone H3 'Lys-4' and 'Lys-79' methylation. Involved in regulating stem cell proliferative fate. This chain is E3 ubiquitin-protein ligase bre-1 (rfp-1), found in Caenorhabditis elegans.